Reading from the N-terminus, the 450-residue chain is Acyltransferase GLAUCE (450 aa).

Residues His-171 and Glu-394 each act as proton acceptor in the active site.

Belongs to the plant acyltransferase family. Restricted to the central cells of embryo sacs.

Its subcellular location is the cytoplasm. The protein localises to the nucleus. Required for double fertilization of the egg cell and the central cell by two sperm cells, resulting in the formation of the embryo and the endosperm. Involved in the regulation of embryonic expression of PHE1. Essential in maternal tissues to ensure the paternal embryonic expression of several genes, including RPS5a and FAC1, both of which being essential for early embryo and endosperm development in fertilized seeds. The polypeptide is Acyltransferase GLAUCE (Arabidopsis thaliana (Mouse-ear cress)).